The sequence spans 129 residues: Large ribosomal subunit protein eL32 (129 aa).

Belongs to the eukaryotic ribosomal protein eL32 family.

In Methanosarcina acetivorans (strain ATCC 35395 / DSM 2834 / JCM 12185 / C2A), this protein is Large ribosomal subunit protein eL32 (rpl32e).